The sequence spans 259 residues: UPF0246 protein Aave_1172 (259 aa).

The protein belongs to the UPF0246 family.

The chain is UPF0246 protein Aave_1172 from Paracidovorax citrulli (strain AAC00-1) (Acidovorax citrulli).